A 289-amino-acid polypeptide reads, in one-letter code: Phospholipase A1 (289 aa).

Residues 1–20 form the signal peptide; it reads MRTLQGWLLPVFMLPMAVYA. Over 21 to 52 the chain is Periplasmic; sequence QEATVKEVHDAPAVRGSIIANMLQEHDNPFTL. A beta stranded transmembrane segment spans residues 53 to 65; it reads YPYDTNYLIYTQT. At 66 to 84 the chain is on the extracellular side; that stretch reads SDLNKEAIASYDWAENARK. Residues 85–99 traverse the membrane as a beta stranded segment; it reads DEVKFQLSLAFPLWR. Topologically, residues 100-105 are periplasmic; that stretch reads GILGPN. The chain crosses the membrane as a beta stranded span at residues 106–118; that stretch reads SVLGASYTQKSWW. Topologically, residues 119–128 are extracellular; the sequence is QLSNSEESSP. Ser126 is a binding site for Ca(2+). A beta stranded membrane pass occupies residues 129-148; that stretch reads FRETNYEPQLFLGFATDYRF. The Periplasmic portion of the chain corresponds to 149–150; the sequence is AG. The beta stranded transmembrane segment at 151-164 threads the bilayer; that stretch reads WTLRDVEMGYNHDS. His162 serves as the catalytic Proton acceptor. Ser164 (nucleophile) is an active-site residue. Residues 165–173 lie on the Extracellular side of the membrane; that stretch reads NGRSDPTSR. Ca(2+)-binding residues include Arg167 and Ser172. The chain crosses the membrane as a beta stranded span at residues 174-186; that stretch reads SWNRLYTRLMAEN. The Periplasmic portion of the chain corresponds to 187-188; sequence GN. Residues 189–198 form a beta stranded membrane-spanning segment; that stretch reads WLVEVKPWYV. At 199 to 216 the chain is on the extracellular side; the sequence is VGNTDDNPDITKYMGYYQ. Asp204 is a binding site for Ca(2+). Residues 217-223 form a beta stranded membrane-spanning segment; sequence LKIGYHL. At 224–225 the chain is on the periplasmic side; it reads GD. The chain crosses the membrane as a beta stranded span at residues 226–234; it reads AVLSAKGQY. Over 235–241 the chain is Extracellular; the sequence is NWNTGYG. Residues 242–250 form a beta stranded membrane-spanning segment; it reads GAELGLSYP. The Periplasmic portion of the chain corresponds to 251 to 255; the sequence is ITKHV. A beta stranded membrane pass occupies residues 256–265; it reads RLYTQVYSGY. The Extracellular segment spans residues 266-274; that stretch reads GESLIDYNF. Residues 275–286 traverse the membrane as a beta stranded segment; sequence NQTRVGVGVMLN. Over 287–289 the chain is Periplasmic; that stretch reads DLF.

The protein belongs to the phospholipase A1 family. As to quaternary structure, homodimer; dimerization is reversible, and the dimeric form is the active one. Ca(2+) serves as cofactor.

The protein resides in the cell outer membrane. It catalyses the reaction a 1,2-diacyl-sn-glycero-3-phosphocholine + H2O = a 2-acyl-sn-glycero-3-phosphocholine + a fatty acid + H(+). The enzyme catalyses a 1,2-diacyl-sn-glycero-3-phosphocholine + H2O = a 1-acyl-sn-glycero-3-phosphocholine + a fatty acid + H(+). Its function is as follows. Hydrolysis of phosphatidylcholine with phospholipase A2 (EC 3.1.1.4) and phospholipase A1 (EC 3.1.1.32) activities. This chain is Phospholipase A1 (pldA), found in Escherichia coli O157:H7.